Here is a 66-residue protein sequence, read N- to C-terminus: Large ribosomal subunit protein bL35 (66 aa).

It belongs to the bacterial ribosomal protein bL35 family.

The sequence is that of Large ribosomal subunit protein bL35 from Afipia carboxidovorans (strain ATCC 49405 / DSM 1227 / KCTC 32145 / OM5) (Oligotropha carboxidovorans).